We begin with the raw amino-acid sequence, 332 residues long: Putative threonine dehydratase (332 aa).

Lysine 56 bears the N6-(pyridoxal phosphate)lysine mark.

This sequence belongs to the serine/threonine dehydratase family. Pyridoxal 5'-phosphate serves as cofactor.

It carries out the reaction L-threonine = 2-oxobutanoate + NH4(+). Its pathway is amino-acid biosynthesis; L-isoleucine biosynthesis; 2-oxobutanoate from L-threonine: step 1/1. The sequence is that of Putative threonine dehydratase from Sinorhizobium fredii (strain NBRC 101917 / NGR234).